A 1451-amino-acid polypeptide reads, in one-letter code: DNA excision repair protein ERCC-6-like (1451 aa).

A TPR 1 repeat occupies 27–60 (YDRYRQKGKEAALNGELPRALELFQLAYQLQPSE). The Helicase ATP-binding domain maps to 118–286 (SLYRDGRKGG…WALFDFACQG (169 aa)). 131 to 138 (DDMGLGKT) is an ATP binding site. A DEAH box motif is present at residues 237–240 (DEAH). The Helicase C-terminal domain maps to 479 to 639 (FVVSLMECLR…PFRYFSKQEL (161 aa)). 7 disordered regions span residues 647-669 (DTRSSSTQQQLQAMHAQSRRSDT), 778-804 (NSFDEPEFEEDEQNLPSAEDAEMETAS), 935-1006 (DDTS…ATTD), 1035-1054 (DEEVHEVEESAAEESPEFQL), 1063-1083 (LEEPSINHDKQNNGEFVNYND), 1096-1140 (RSTP…LTSS), and 1182-1343 (LLEN…SAEL). The span at 781–804 (DEPEFEEDEQNLPSAEDAEMETAS) shows a compositional bias: acidic residues. Polar residues-rich tracts occupy residues 944–964 (SDFNTESKQQNSSQRFQSPSL) and 992–1002 (QVLSSPLSQHE). Position 961 is a phosphoserine (S961). Residues 1035–1050 (DEEVHEVEESAAEESP) are compositionally biased toward acidic residues. Over residues 1063 to 1074 (LEEPSINHDKQN) the composition is skewed to basic and acidic residues. A compositionally biased stretch (acidic residues) spans 1121–1132 (DTEEEEEEEEES). Polar residues predominate over residues 1213–1230 (VQTSSGDNSKSYETSEAN). The segment covering 1244 to 1278 (YREGKNTSDKVSESNETHSEEFAEEEKPSGDKSES) has biased composition (basic and acidic residues). A compositionally biased stretch (acidic residues) spans 1310 to 1341 (SEADESVVEEEEPSGETLNTEESEMGEEEESA). The stretch at 1402-1435 (YNLLVLSGKQSLAEGRKQEALDFFLKAIDINTGD) is one TPR 2 repeat.

This sequence belongs to the SNF2/RAD54 helicase family.

The protein resides in the chromosome. It localises to the centromere. Its subcellular location is the kinetochore. The catalysed reaction is ATP + H2O = ADP + phosphate + H(+). Functionally, DNA helicase that acts as a tension sensor that associates with catenated DNA which is stretched under tension until it is resolved during anaphase. Functions as ATP-dependent DNA translocase. Can promote Holliday junction branch migration (in vitro). This is DNA excision repair protein ERCC-6-like (ercc6l) from Danio rerio (Zebrafish).